The chain runs to 168 residues: Siroheme decarboxylase NirH subunit (168 aa).

This sequence belongs to the Ahb/Nir family. As to quaternary structure, probably forms a complex composed of NirD, NirL, NirG and NirH. All proteins are required for the total conversion of siroheme to didecarboxysiroheme.

It carries out the reaction siroheme + 2 H(+) = 12,18-didecarboxysiroheme + 2 CO2. The protein operates within porphyrin-containing compound metabolism. In terms of biological role, involved in heme d1 biosynthesis. Catalyzes the decarboxylation of siroheme into didecarboxysiroheme. This Stutzerimonas stutzeri (Pseudomonas stutzeri) protein is Siroheme decarboxylase NirH subunit.